We begin with the raw amino-acid sequence, 96 residues long: Putative septation protein SpoVG (96 aa).

It belongs to the SpoVG family.

Its function is as follows. Could be involved in septation. In Phytoplasma australiense, this protein is Putative septation protein SpoVG.